The following is a 63-amino-acid chain: Male-specific sperm protein Mst84Da (63 aa).

It belongs to the MST(3)CGP family. As to expression, testis.

The protein is Male-specific sperm protein Mst84Da (Mst84Da) of Drosophila melanogaster (Fruit fly).